We begin with the raw amino-acid sequence, 458 residues long: Sphingoid long chain base kinase 4 (458 aa).

One can recognise a DAGKc domain in the interval 103 to 241 (KRSRRFIVFI…FDLMTFEQKG (139 aa)). ATP is bound by residues 113–115 (NPH) and threonine 145. Residue 170–173 (GGDG) participates in substrate binding. The active-site Proton donor/acceptor is aspartate 172. ATP contacts are provided by residues glutamate 177, 202 to 204 (GSG), arginine 266, arginine 272, and 426 to 428 (DGE).

It is found in the cell membrane. The protein resides in the endoplasmic reticulum membrane. Its subcellular location is the late endosome membrane. It localises to the golgi apparatus membrane. It catalyses the reaction a sphingoid base + ATP = a sphingoid 1-phosphate + ADP + H(+). Catalyzes the phosphorylation of the sphingoid long chain bases dihydrosphingosine (DHS) and phytosphingosine (PHS) to form dihydrosphingosine 1-phosphate (DHS-1P) and phytosphingosine 1-phosphate (PHS-1P) respectively. Involved in the biosynthesis of sphingolipids and ceramides. Involved in heat-induced transient cell cycle arrest. Accumulation of phosphorylated sphingoid long chain bases (LCBPs) stimulates calcium influx and activates calcineurin signaling. Involved in heat-stress resistance. In Schizosaccharomyces pombe (strain 972 / ATCC 24843) (Fission yeast), this protein is Sphingoid long chain base kinase 4 (lcb4).